Consider the following 673-residue polypeptide: RAS guanyl-releasing protein 4 (673 aa).

2 stretches are compositionally biased toward basic residues: residues 1–10 (MNRKDSKRKS) and 20–32 (GRGR…RHKT). Disordered stretches follow at residues 1–34 (MNRK…KTCP) and 162–188 (QSLG…PGLG). The region spanning 49–172 (GMLNEGGCSE…SLGDFSSRLS (124 aa)) is the N-terminal Ras-GEF domain. Residues 201–432 (ETGELAEHLT…YELSYAREPR (232 aa)) enclose the Ras-GEF domain. The 36-residue stretch at 466-501 (HVEQLVESVFKNYDPDGRGTISQEDFERLSGNFPFA) folds into the EF-hand domain. The Phorbol-ester/DAG-type zinc-finger motif lies at 540–590 (LHTFQEVTFRKPTFCNSCSGFLWGVTKQGYRCRDCGLCCHRHCRDQVKVEC). Disordered stretches follow at residues 593-618 (RPGA…ASCG) and 638-673 (RHAW…KLNS). The span at 603 to 612 (PEAPVPPTPV) shows a compositional bias: pro residues.

The protein belongs to the RASGRP family.

The protein resides in the cytoplasm. It localises to the cell membrane. Functionally, functions as a cation- and diacylglycerol (DAG)-regulated nucleotide exchange factor activating Ras through the exchange of bound GDP for GTP. In neutrophils, participates in a phospholipase C-activating N-formyl peptide-activated GPCR (G protein-coupled receptor) signaling pathway by promoting Ras-mediated activation of PIK3CG/PI3Kgamma to promote neutrophil functional responses. In CD117(+) dendritic cells and mast cells, participates in an lipopolysaccharide (LPS)-activated signaling pathway that stimulates the production of interferon-gamma and other pro-inflammatory cytokines by natural killer (NK) cells. May function in mast cell differentiation. Does not appear to be required for the development of B-cells, DC-cells, T-cells, or NK-cells. This chain is RAS guanyl-releasing protein 4 (RASGRP4), found in Bos taurus (Bovine).